Consider the following 628-residue polypeptide: tRNA uridine 5-carboxymethylaminomethyl modification enzyme MnmG (628 aa).

Residues 14–19 (GAGHAG), Val-126, and Ser-181 each bind FAD. NAD(+) is bound at residue 273 to 287 (GPRYCPSIEDKVVRF). Residue Gln-370 participates in FAD binding.

It belongs to the MnmG family. In terms of assembly, homodimer. Heterotetramer of two MnmE and two MnmG subunits. It depends on FAD as a cofactor.

The protein localises to the cytoplasm. In terms of biological role, NAD-binding protein involved in the addition of a carboxymethylaminomethyl (cmnm) group at the wobble position (U34) of certain tRNAs, forming tRNA-cmnm(5)s(2)U34. This is tRNA uridine 5-carboxymethylaminomethyl modification enzyme MnmG from Bacillus licheniformis (strain ATCC 14580 / DSM 13 / JCM 2505 / CCUG 7422 / NBRC 12200 / NCIMB 9375 / NCTC 10341 / NRRL NRS-1264 / Gibson 46).